A 346-amino-acid polypeptide reads, in one-letter code: MARHPRWTLSQVTELFGKPLLELLFEAQQIHRQHFDPQQVQVSTLLSIKTGACPEDCKYCPQSSRYKTGLEAERLMEVEQVLDSARKAKNAGSTRFCMGAAWRNPHERDMPYLEKIVQGVKAMGLETCMTLGMLNESQAQRLANAGLDYYNHNLDTSPEFYGNIITTRTYQERLDTLEKVREAGIKVCSGGIVGLGETVTDRAGLLLQLANLPTPPESVPINMLVKVKGTPLADNDDVDAFDFIRTIAVARIMMPTSYVRLSAGREQMNEQTQAMCFMAGANSIFYGCKLLTTPNPAEDKDLQLFRKLGLNPQQTRVLAGDNEQQQRLEQTLMTPDTDDYYNAAAL.

A Radical SAM core domain is found at 38-256 (QQVQVSTLLS…IAVARIMMPT (219 aa)). Positions 53, 57, and 60 each coordinate [4Fe-4S] cluster. 4 residues coordinate [2Fe-2S] cluster: cysteine 97, cysteine 128, cysteine 188, and arginine 260.

It belongs to the radical SAM superfamily. Biotin synthase family. As to quaternary structure, homodimer. It depends on [4Fe-4S] cluster as a cofactor. Requires [2Fe-2S] cluster as cofactor.

It carries out the reaction (4R,5S)-dethiobiotin + (sulfur carrier)-SH + 2 reduced [2Fe-2S]-[ferredoxin] + 2 S-adenosyl-L-methionine = (sulfur carrier)-H + biotin + 2 5'-deoxyadenosine + 2 L-methionine + 2 oxidized [2Fe-2S]-[ferredoxin]. The protein operates within cofactor biosynthesis; biotin biosynthesis; biotin from 7,8-diaminononanoate: step 2/2. Functionally, catalyzes the conversion of dethiobiotin (DTB) to biotin by the insertion of a sulfur atom into dethiobiotin via a radical-based mechanism. The polypeptide is Biotin synthase (Salmonella choleraesuis (strain SC-B67)).